The following is a 1065-amino-acid chain: Leucine-rich repeats and immunoglobulin-like domains protein 2 (1065 aa).

An N-terminal signal peptide occupies residues 1–40 (MAPAPLGVPEEQLLGCRSRVLSRLLFIAQTALLLLPAAGA). The LRRNT domain maps to 41-75 (GLCPAPCSCRIPLLDCSRRKLPAPSWRALSGLLPP). At 41 to 807 (GLCPAPCSCR…HEDDGWTTVG (767 aa)) the chain is on the extracellular side. LRR repeat units lie at residues 76–97 (DTAILDFSHNRLSNWNISLESQ), 98–119 (TLQEVKMNYNELTEIPYFGEPT), 121–142 (NITLLSLVHNIIPEINAQALQF), 145–166 (ALESLDLSSNIISEIKTSSFPR), 168–189 (QLKYLNLSNNRITTLEAGCFDN), 193–214 (SLLVVKLNRNRMSMIPPKIFKL), 216–237 (HLQFLELKRNRIKIVEGLTFQG), 240–261 (SLRSLKMQRNGISKLKDGAFFG), 264–285 (NMEELELEHNNLTRVNKGWLYG), 288–309 (MLQQLYVSQNAIERISPDAWEF), 312–333 (RLSELDLSYNQLTRLDESAFVG), 336–357 (LLERLNLGDNRVTHIADGVFRF), 360–382 (NLQTLDLRNNEISWAIEDASEAF), 387–408 (SLTKLILQGNQIKSITKKAFIG), and 411–432 (SLEHLDLNNNAIMSIQENAFSQ). Asparagine 91 carries an N-linked (GlcNAc...) asparagine glycan. Asparagine 121 carries N-linked (GlcNAc...) asparagine glycosylation. N-linked (GlcNAc...) asparagine glycans are attached at residues asparagine 173 and asparagine 189. A glycan (N-linked (GlcNAc...) asparagine) is linked at asparagine 274. Asparagine 441, asparagine 468, asparagine 514, asparagine 571, and asparagine 589 each carry an N-linked (GlcNAc...) asparagine glycan. In terms of domain architecture, LRRCT spans 443–494 (SSLLCDCHLKWLLQWLVDNNFQHSVNVSCAHPEWLAGQSILNVDLKDFVCDD). Ig-like C2-type domains lie at 498 to 597 (PQIR…AKLT), 602 to 691 (PSFL…ASLT), and 696 to 785 (PSFI…NVIS). Residues cysteine 519 and cysteine 580 are joined by a disulfide bond. The cysteines at positions 623 and 675 are disulfide-linked. N-linked (GlcNAc...) asparagine glycosylation is found at asparagine 687 and asparagine 728. Cysteine 717 and cysteine 766 are joined by a disulfide. A helical transmembrane segment spans residues 808-828 (IVIIVVVCCVVGTSLIWVIVI). The Cytoplasmic segment spans residues 829–1065 (YHMRRKNEDY…RNIQDGSEGT (237 aa)). Residue tyrosine 906 is modified to Phosphotyrosine. Disordered stretches follow at residues 963–990 (SANREPSAFPTNHERISEKKLPSTQMSG) and 1003–1040 (ELGLPHPPFSQQPVHESPQLHQNEGLAGREPDCSASSM). Over residues 974–983 (NHERISEKKL) the composition is skewed to basic and acidic residues. Residues 1013 to 1024 (QQPVHESPQLHQ) show a composition bias toward polar residues.

As to expression, detected in all tissues analyzed.

The protein localises to the cell membrane. The protein resides in the cytoplasm. This chain is Leucine-rich repeats and immunoglobulin-like domains protein 2 (LRIG2), found in Homo sapiens (Human).